The following is a 156-amino-acid chain: Small ribosomal subunit protein uS7c (156 aa).

It belongs to the universal ribosomal protein uS7 family. In terms of assembly, part of the 30S ribosomal subunit.

Its subcellular location is the plastid. It is found in the chloroplast. In terms of biological role, one of the primary rRNA binding proteins, it binds directly to 16S rRNA where it nucleates assembly of the head domain of the 30S subunit. This is Small ribosomal subunit protein uS7c (rps7) from Ostreococcus tauri.